We begin with the raw amino-acid sequence, 325 residues long: Reticulocalbin-1 (325 aa).

The N-terminal stretch at 1-23 (MARGGRLGLALGLLLALVLALRA) is a signal peptide. Residue Asn47 is glycosylated (N-linked (GlcNAc...) asparagine; partial). 2 positions are modified to phosphoserine: Ser49 and Ser74. 6 consecutive EF-hand domains span residues 73–108 (ESKE…VQKR), 109–144 (YIYD…YYLG), 160–195 (KMLP…EEFE), 197–232 (MKEI…HEDN), 238–273 (WVLS…QDYD), and 274–309 (HAQA…FVGS). Ca(2+) contacts are provided by Asp86, Asp88, Asp90, Glu97, Asp122, Asp124, Asp126, Lys128, Glu133, Asp173, Asp175, Asp177, Thr179, Glu184, Asp210, Asn212, Asp214, Glu221, Asp251, Asn253, Asp255, Lys257, Glu262, Asp287, Asn289, Asp291, Met293, and Glu298. Residues 322 to 325 (HDEL) carry the Prevents secretion from ER motif.

This sequence belongs to the CREC family. In terms of processing, O-glycosylated. O-mannosylated by POMT1 and POMT2 and elongated by POMGNT1.

It localises to the endoplasmic reticulum lumen. In terms of biological role, may regulate calcium-dependent activities in the endoplasmic reticulum lumen or post-ER compartment. This is Reticulocalbin-1 (Rcn1) from Mus musculus (Mouse).